A 190-amino-acid polypeptide reads, in one-letter code: Endoribonuclease YbeY (190 aa).

The disordered stretch occupies residues 1–20; it reads MDVENDRPPRRGAAGERNSG. Zn(2+)-binding residues include His147, His151, and His157.

It belongs to the endoribonuclease YbeY family. The cofactor is Zn(2+).

Its subcellular location is the cytoplasm. Single strand-specific metallo-endoribonuclease involved in late-stage 70S ribosome quality control and in maturation of the 3' terminus of the 16S rRNA. This chain is Endoribonuclease YbeY, found in Nitrobacter hamburgensis (strain DSM 10229 / NCIMB 13809 / X14).